A 337-amino-acid polypeptide reads, in one-letter code: Serpentine receptor class delta-18 (337 aa).

A run of 6 helical transmembrane segments spans residues 2–22 (IIFF…LNLL), 90–110 (VGLS…LLSF), 130–150 (LILV…TIFA), 187–207 (IYSI…IFIL), 236–256 (ALTI…FYFL), and 270–290 (SIYA…LYFV).

The protein belongs to the nematode receptor-like protein srd family.

It is found in the membrane. The chain is Serpentine receptor class delta-18 (srd-18) from Caenorhabditis elegans.